Reading from the N-terminus, the 119-residue chain is BLOC-1-related complex subunit 8 (119 aa).

Phosphoserine is present on serine 109.

Belongs to the BORCS8 family. In terms of assembly, component of the BLOC-one-related complex (BORC) which is composed of BLOC1S1, BLOC1S2, BORCS5, BORCS6, BORCS7, BORCS8, KXD1 and SNAPIN.

It is found in the lysosome membrane. In terms of biological role, as part of the BLOC-one-related complex (BORC), it plays a role in the movement and localization of lysosomes at the cell periphery. Associated with the cytosolic face of lysosomes, BORC recruits ARL8B to the lysosomal membrane and couples lysosomes to microtubule plus-end-directed kinesin motors, driving lysosome movement toward the cell periphery. This chain is BLOC-1-related complex subunit 8, found in Homo sapiens (Human).